Reading from the N-terminus, the 135-residue chain is MRNMMSLCWQYLRAFTIIYLCLWAGKALALLLPIVIPGSIIGMLILFVLLTLQILPSPWVKPSCQLLIRYMALLFVPIGVGVMQYYEQLTKQFGPIVVSCFISTLIVMLVVAYSSHYVHRDRKVISPSTPTEGEK.

Helical transmembrane passes span 30–50 (LLLPIVIPGSIIGMLILFVLL), 66–86 (LLIRYMALLFVPIGVGVMQYY), and 93–113 (FGPIVVSCFISTLIVMLVVAY).

This sequence belongs to the UPF0299 family.

The protein localises to the cell inner membrane. The polypeptide is UPF0299 membrane protein YPK_2559 (Yersinia pseudotuberculosis serotype O:3 (strain YPIII)).